Consider the following 295-residue polypeptide: CRISPR system Cmr endoribonuclease Cmr4 (295 aa).

It belongs to the CRISPR system Cmr4 family. As to quaternary structure, forms oligomers in isolation. Part of the type III-B Cmr ribonucleoprotein (RNP) complex, an elongated RNP with Cmr2 and Cmr3 as the base, with Cmr4 and Cmr5 forming a helical core along the mature crRNA (39 or 45 nt in length), while the complex is capped by Cmr6 and Cmr1. The 5' end of the crRNA is bound to Cmr2 and Cmr3, while Cmr6 and a Cmr1 subunit (Cmr1-1 or Cmr1-2) cap the 3' end of the crRNA. The target RNA lies anti-parallel to the crRNA, with its 5' end near Cmr1 and Cmr6 and its 3' end near Cmr2 and Cmr3; major target RNA cleavage occurs nears the junction of Cmr1/Cmr6 and Cmr4/Cmr5, with minor cleavage occurring at 6 nt intervals which coincide with the proposed spacing of Cmr4 subunits. Interacts with Cmr5. Interacts with Cmr2, Cmr3, Cmr5 and Cmr6.

Its subcellular location is the cytoplasm. Functionally, CRISPR (clustered regularly interspaced short palindromic repeat), is an adaptive immune system that provides protection against mobile genetic elements (viruses, transposable elements and conjugative plasmids). CRISPR clusters contain sequences complementary to antecedent mobile elements and target invading nucleic acids. CRISPR clusters are transcribed and processed into CRISPR RNA (crRNA), formerly called psiRNA (prokaryotic silencing) in this organism. Part of the Cmr ribonucleoprotein complex which has divalent cation-dependent endoribonuclease activity specific for ssRNA complementary to the crRNA (target RNA), generating 5' hydroxy- and 3' phosphate or 2'-3' cyclic phosphate termini. This is probably the subunit that cleaves the target RNA. Cmr complex does not cleave ssDNA complementary to the crRNA. Cleavage of target RNA is guided by the crRNA; substrate cleavage occurs a fixed distance (14 nt) from the 3' end of the crRNA. In vitro reconstitution shows Cmr1-2 and Cmr5 are not absolutely necessary for target cleavage. This is CRISPR system Cmr endoribonuclease Cmr4 from Pyrococcus furiosus (strain ATCC 43587 / DSM 3638 / JCM 8422 / Vc1).